A 700-amino-acid polypeptide reads, in one-letter code: Leucine zipper putative tumor suppressor 3 (700 aa).

Disordered stretches follow at residues 1-20, 40-121, 133-188, and 202-344; these read MAPADLASEGPKLEDPPAPH, RADP…SEDK, LRGS…SEPL, and FHSM…PPSP. Over residues 109–121 the composition is skewed to basic and acidic residues; sequence NRERPGRYPSEDK. Polar residues predominate over residues 203–216; the sequence is HSMQNLCPPQTNGT. Low complexity-rich tracts occupy residues 248–265 and 301–321; these read DSGRNSLTSLPTYSSSYS and GTSDSGRASSKSGSSSSMGRS. The segment covering 322 to 333 has biased composition (gly residues); that stretch reads GHLGSGEGGNGG. Residues S343 and S345 each carry the phosphoserine modification. 2 coiled-coil regions span residues 345-523 and 597-666; these read SALI…SLRD and TRAL…RLRE. Residues 662-700 form a disordered region; the sequence is RRLRERGAAGGSSTPTPQHGEEKKAWTPSRLERIESTEI. Residues 680-700 show a composition bias toward basic and acidic residues; the sequence is HGEEKKAWTPSRLERIESTEI.

The protein belongs to the LZTS3 family. As to quaternary structure, interacts (via C-terminus) with SHANK3 (via PDZ domain). Interacts (via coiled coil) with SIPA1L1. Can form homooligomers.

It is found in the synapse. The protein localises to the postsynaptic density. The protein resides in the cell projection. Its subcellular location is the dendritic spine. It localises to the dendrite. It is found in the cytoplasm. The protein localises to the cytoskeleton. Its function is as follows. May be involved in promoting the maturation of dendritic spines, probably via regulating SIPA1L1 levels at the postsynaptic density of synapses. This chain is Leucine zipper putative tumor suppressor 3, found in Mus musculus (Mouse).